Here is a 510-residue protein sequence, read N- to C-terminus: Cobyric acid synthase (510 aa).

The GATase cobBQ-type domain occupies 262 to 460 (EIKVGIIKLP…IHGIFENDEW (199 aa)). C343 acts as the Nucleophile in catalysis. H452 is a catalytic residue.

The protein belongs to the CobB/CobQ family. CobQ subfamily.

Its pathway is cofactor biosynthesis; adenosylcobalamin biosynthesis. Functionally, catalyzes amidations at positions B, D, E, and G on adenosylcobyrinic A,C-diamide. NH(2) groups are provided by glutamine, and one molecule of ATP is hydrogenolyzed for each amidation. This chain is Cobyric acid synthase, found in Prochlorococcus marinus (strain MIT 9515).